The primary structure comprises 339 residues: 1-aminocyclopropane-1-carboxylate deaminase (339 aa).

K52 is subject to N6-(pyridoxal phosphate)lysine. S79 serves as the catalytic Nucleophile.

The protein belongs to the ACC deaminase/D-cysteine desulfhydrase family. In terms of assembly, homotrimer. The cofactor is pyridoxal 5'-phosphate.

The catalysed reaction is 1-aminocyclopropane-1-carboxylate + H2O = 2-oxobutanoate + NH4(+). In terms of biological role, catalyzes a cyclopropane ring-opening reaction, the irreversible conversion of 1-aminocyclopropane-1-carboxylate (ACC) to ammonia and alpha-ketobutyrate. Allows growth on ACC as a nitrogen source. In Bradyrhizobium sp. (strain BTAi1 / ATCC BAA-1182), this protein is 1-aminocyclopropane-1-carboxylate deaminase.